Reading from the N-terminus, the 203-residue chain is UPF0301 protein Sde_3637 (203 aa).

This sequence belongs to the UPF0301 (AlgH) family.

The chain is UPF0301 protein Sde_3637 from Saccharophagus degradans (strain 2-40 / ATCC 43961 / DSM 17024).